The following is a 290-amino-acid chain: Cilia- and flagella-associated protein 298 (290 aa).

It belongs to the CFAP298 family. In terms of assembly, interacts with ZMYND10. In terms of tissue distribution, expressed in the trachea (at protein level).

The protein localises to the cytoplasm. The protein resides in the cytoskeleton. Its subcellular location is the cilium basal body. Its function is as follows. Plays a role in motile cilium function, possibly by acting on outer dynein arm assembly. Seems to be important for initiation rather than maintenance of cilium motility. Required for correct positioning of cilia at the apical cell surface, suggesting an additional role in the planar cell polarity (PCP) pathway. May suppress canonical Wnt signaling activity. This chain is Cilia- and flagella-associated protein 298, found in Rattus norvegicus (Rat).